Here is a 434-residue protein sequence, read N- to C-terminus: MSGEEDLIDYSDDELNNETTAPASNGKKGDAAAAAQNVDKKGSYVGIHSTGFRDFLLKPELLRAIADCGFEHPSEVQQTCIPQAMLGGDIICQAKSGLGKTAVFVLTTLQQVEPVAGECSVLVMCHTRELAFQIRNEYNRFSKYMPDIKTGVFYGGTPIQKDAEVLKNKETHPHIIVGTPGRLNALVRDKHLRLGNVRMFVLDECDKMLDQIDMRRDVQEIFRATPQQKQVMMFSATLADEIKPICRKFMQNPTEHYVDEDTKLTLHGLQQYYIPLEEREKNRKLNELLDELQFNQVIIFVKSTIRATELDKLLRECNFPSIAVHSGVSQEERIRRYKEFKEFNKRICVATDVFGRGIDIERINLAINYDLPADADSYLHRVGRAGRFGTKGLAISFVNSDQDKEVLQQIEKRFEVALPEFPKEGIDASTYMAA.

A compositionally biased stretch (acidic residues) spans M1–N16. A disordered region spans residues M1–A32. The short motif at T50–Q78 is the Q motif element. Residues I81–H256 form the Helicase ATP-binding domain. Residue A94 to T101 participates in ATP binding. The short motif at D203–D206 is the DEAD box element. Residues G268–S429 enclose the Helicase C-terminal domain.

The protein belongs to the DEAD box helicase family. DECD subfamily.

The protein resides in the nucleus. It catalyses the reaction ATP + H2O = ADP + phosphate + H(+). Functionally, ATP-binding RNA helicase involved in transcription elongation and required for the export of mRNA out of the nucleus. SUB2 also plays a role in pre-mRNA splicing and spliceosome assembly. May be involved in rDNA and telomeric silencing, and maintenance of genome integrity. This is ATP-dependent RNA helicase SUB2 (SUB2) from Chaetomium globosum (strain ATCC 6205 / CBS 148.51 / DSM 1962 / NBRC 6347 / NRRL 1970) (Soil fungus).